The following is a 1342-amino-acid chain: Receptor tyrosine-protein kinase erbB-3 (1342 aa).

The N-terminal stretch at 1 to 19 (MRANDALQVLGLLFSLARG) is a signal peptide. The Extracellular portion of the chain corresponds to 20–643 (SEVGNSQAVC…LVLIGKTHLT (624 aa)). A disulfide bridge links C29 with C56. An N-linked (GlcNAc...) asparagine glycan is attached at N126. Disulfide bonds link C156–C183, C186–C194, C190–C202, C210–C218, C214–C226, C227–C235, C231–C243, C246–C255, C259–C286, C290–C301, C305–C320, and C323–C327. N250 carries an N-linked (GlcNAc...) asparagine glycan. 5 N-linked (GlcNAc...) asparagine glycosylation sites follow: N353, N408, N414, N437, and N469. Intrachain disulfides connect C500–C509, C504–C517, C520–C529, C533–C549, C552–C565, C556–C573, C576–C585, C589–C610, C613–C621, and C617–C629. Residue N522 is glycosylated (N-linked (GlcNAc...) asparagine). N566 carries an N-linked (GlcNAc...) asparagine glycan. A glycan (N-linked (GlcNAc...) asparagine) is linked at N616. The helical transmembrane segment at 644 to 664 (MALTVIAGLVVIFMMLGGTFL) threads the bilayer. At 665 to 1342 (YWRGRRIQNK…LFPKANAQRT (678 aa)) the chain is on the cytoplasmic side. S686 is subject to Phosphoserine. The region spanning 709–966 (LRKLKVLGSG…TFKELANEFT (258 aa)) is the Protein kinase domain. ATP-binding positions include 715–723 (LGSGVFGTV), K742, 788–790 (QYL), and 834–839 (NLAARN). N834 functions as the Proton acceptor in the catalytic mechanism. Disordered stretches follow at residues 980–999 (RESGPGIAPGPEPHGLTNKK) and 1033–1152 (LPVG…PGLE). S982 carries the phosphoserine modification. The span at 1042-1075 (RGSQSLLSPSSGYMPMNQGNLGESCQESAVSGSS) shows a compositional bias: polar residues.

Belongs to the protein kinase superfamily. Tyr protein kinase family. EGF receptor subfamily. In terms of assembly, monomer and homodimer. Heterodimer with each of the other ERBB receptors (Potential). Interacts with CSPG5. Interacts with GRB7. Interacts with MUC1. Interacts with MYOC. Interacts with isoform 2 of PA2G4. Found in a ternary complex with NRG1 and ITGAV:ITGB3 or ITGA6:ITGB4. Autophosphorylated. Ligand-binding increases phosphorylation on tyrosine residues and promotes its association with the p85 subunit of phosphatidylinositol 3-kinase. Epithelial tissues and brain.

It is found in the cell membrane. The protein resides in the secreted. It carries out the reaction L-tyrosyl-[protein] + ATP = O-phospho-L-tyrosyl-[protein] + ADP + H(+). In terms of biological role, tyrosine-protein kinase that plays an essential role as cell surface receptor for neuregulins. Binds to neuregulin-1 (NRG1) and is activated by it; ligand-binding increases phosphorylation on tyrosine residues and promotes its association with the p85 subunit of phosphatidylinositol 3-kinase. May also be activated by CSPG5. Involved in the regulation of myeloid cell differentiation. The sequence is that of Receptor tyrosine-protein kinase erbB-3 (ERBB3) from Homo sapiens (Human).